A 324-amino-acid chain; its full sequence is Tyrosine--tRNA ligase (324 aa).

Tyr36 is a binding site for L-tyrosine. A 'HIGH' region motif is present at residues 41–49 (PSGKVHLGH). L-tyrosine-binding residues include Tyr158, Gln162, Asp165, and Gln180. The 'KMSKS' region motif lies at 215 to 219 (KMSSS). Ser218 is a binding site for ATP.

This sequence belongs to the class-I aminoacyl-tRNA synthetase family. TyrS type 3 subfamily. As to quaternary structure, homodimer.

The protein resides in the cytoplasm. The catalysed reaction is tRNA(Tyr) + L-tyrosine + ATP = L-tyrosyl-tRNA(Tyr) + AMP + diphosphate + H(+). Catalyzes the attachment of tyrosine to tRNA(Tyr) in a two-step reaction: tyrosine is first activated by ATP to form Tyr-AMP and then transferred to the acceptor end of tRNA(Tyr). The chain is Tyrosine--tRNA ligase from Methanopyrus kandleri (strain AV19 / DSM 6324 / JCM 9639 / NBRC 100938).